A 33-amino-acid polypeptide reads, in one-letter code: Actin (33 aa).

This sequence belongs to the actin family.

The protein resides in the cytoplasm. It is found in the cytoskeleton. The catalysed reaction is ATP + H2O = ADP + phosphate + H(+). Its function is as follows. Actins are highly conserved proteins that are involved in various types of cell motility and are ubiquitously expressed in all eukaryotic cells. The chain is Actin from Dictyocaulus viviparus (Bovine lungworm).